Consider the following 316-residue polypeptide: tRNA uridine(34) hydroxylase (316 aa).

The 95-residue stretch at 123–217 (LDEDTVVIDA…YGKNPETRGE (95 aa)) folds into the Rhodanese domain. Cys177 serves as the catalytic Cysteine persulfide intermediate.

It belongs to the TrhO family.

It carries out the reaction uridine(34) in tRNA + AH2 + O2 = 5-hydroxyuridine(34) in tRNA + A + H2O. In terms of biological role, catalyzes oxygen-dependent 5-hydroxyuridine (ho5U) modification at position 34 in tRNAs. This is tRNA uridine(34) hydroxylase from Enterococcus faecalis (strain ATCC 700802 / V583).